Reading from the N-terminus, the 138-residue chain is Acidic phospholipase A2 BE-I-PLA2 (138 aa).

A signal peptide spans 1-16 (MRTLWIMAVLLVGVEG). 7 cysteine pairs are disulfide-bonded: cysteine 42–cysteine 131, cysteine 44–cysteine 60, cysteine 59–cysteine 111, cysteine 65–cysteine 138, cysteine 66–cysteine 104, cysteine 73–cysteine 97, and cysteine 91–cysteine 102. Ca(2+) is bound by residues tyrosine 43, glycine 45, and glycine 47. The active site involves histidine 63. Aspartate 64 contributes to the Ca(2+) binding site. Aspartate 105 is a catalytic residue.

This sequence belongs to the phospholipase A2 family. Group II subfamily. D49 sub-subfamily. Ca(2+) serves as cofactor. Expressed by the venom gland.

It is found in the secreted. The catalysed reaction is a 1,2-diacyl-sn-glycero-3-phosphocholine + H2O = a 1-acyl-sn-glycero-3-phosphocholine + a fatty acid + H(+). Its function is as follows. Snake venom phospholipase A2 that shows a potent inhibition of human platelet aggregation. This inhibition is concentration-dependent when aggregation is induced by collagen, and concentration-independent when aggregation is induced by arachidonic acid. In human umbilical-cord vein endothelial cells, this toxin stimulates endothelial cells to release prostaglandin I(2), suggesting an increase of its potential anti-platelet activity in vivo. PLA2 catalyzes the calcium-dependent hydrolysis of the 2-acyl groups in 3-sn-phosphoglycerides. This is Acidic phospholipase A2 BE-I-PLA2 from Bothrops erythromelas (Caatinga lance head).